A 255-amino-acid chain; its full sequence is Hydroxyacylglutathione hydrolase (255 aa).

7 residues coordinate Zn(2+): His56, His58, Asp60, His61, His114, Asp133, and His171.

It belongs to the metallo-beta-lactamase superfamily. Glyoxalase II family. Monomer. It depends on Zn(2+) as a cofactor.

The catalysed reaction is an S-(2-hydroxyacyl)glutathione + H2O = a 2-hydroxy carboxylate + glutathione + H(+). Its pathway is secondary metabolite metabolism; methylglyoxal degradation; (R)-lactate from methylglyoxal: step 2/2. Functionally, thiolesterase that catalyzes the hydrolysis of S-D-lactoyl-glutathione to form glutathione and D-lactic acid. The sequence is that of Hydroxyacylglutathione hydrolase from Roseobacter denitrificans (strain ATCC 33942 / OCh 114) (Erythrobacter sp. (strain OCh 114)).